Reading from the N-terminus, the 407-residue chain is 1-deoxy-D-xylulose 5-phosphate reductoisomerase (407 aa).

NADPH contacts are provided by Thr-25, Gly-26, Ser-27, Ile-28, Asn-53, and Asn-136. 1-deoxy-D-xylulose 5-phosphate is bound at residue Lys-137. An NADPH-binding site is contributed by Glu-138. Residue Asp-162 coordinates Mn(2+). The 1-deoxy-D-xylulose 5-phosphate site is built by Ser-163, Glu-164, Ser-188, and His-211. Residue Glu-164 coordinates Mn(2+). An NADPH-binding site is contributed by Gly-217. 1-deoxy-D-xylulose 5-phosphate-binding residues include Ser-224, Asn-229, Lys-230, and Glu-233. Residue Glu-233 participates in Mn(2+) binding.

The protein belongs to the DXR family. Requires Mg(2+) as cofactor. The cofactor is Mn(2+).

The catalysed reaction is 2-C-methyl-D-erythritol 4-phosphate + NADP(+) = 1-deoxy-D-xylulose 5-phosphate + NADPH + H(+). The protein operates within isoprenoid biosynthesis; isopentenyl diphosphate biosynthesis via DXP pathway; isopentenyl diphosphate from 1-deoxy-D-xylulose 5-phosphate: step 1/6. Functionally, catalyzes the NADPH-dependent rearrangement and reduction of 1-deoxy-D-xylulose-5-phosphate (DXP) to 2-C-methyl-D-erythritol 4-phosphate (MEP). The chain is 1-deoxy-D-xylulose 5-phosphate reductoisomerase from Bradyrhizobium sp. (strain ORS 278).